The following is a 331-amino-acid chain: Vitamin B12 import system permease protein BtuC (331 aa).

Helical transmembrane passes span 20 to 42 (IMSVVLVLLSTIHLMVGEVFLSP), 62 to 84 (LVAAAMIGAALAVSGATLQVLLG), 91 to 113 (GVLGISGGASLAMVLVMFALPVL), 118 to 140 (IFMLAAIAGSMLFTLILVGIARA), 147 to 169 (RLLLVGVALGILSSAIVTWAFYF), 189 to 208 (ASWYQHTVTLVMLPVLVWLC), 240 to 262 (LAISVLVGCSVALGGIISFVGLV), 277 to 299 (YLLPLSAIFGAALLVFADIGARL), and 306 to 325 (LPLGVMTTSIGAPIFIWMLV).

The protein belongs to the binding-protein-dependent transport system permease family. FecCD subfamily. The complex is composed of two ATP-binding proteins (BtuD), two transmembrane proteins (BtuC) and a solute-binding protein (BtuF).

Its subcellular location is the cell inner membrane. Its function is as follows. Part of the ABC transporter complex BtuCDF involved in vitamin B12 import. Involved in the translocation of the substrate across the membrane. The sequence is that of Vitamin B12 import system permease protein BtuC from Vibrio parahaemolyticus serotype O3:K6 (strain RIMD 2210633).